The following is a 131-amino-acid chain: Peptide methionine sulfoxide reductase MsrB (131 aa).

A MsrB domain is found at 8–130 (LEEWKEMLDP…NSVCLDLVPR (123 aa)). Positions 47, 50, 96, and 99 each coordinate Zn(2+). C119 serves as the catalytic Nucleophile.

This sequence belongs to the MsrB Met sulfoxide reductase family. Requires Zn(2+) as cofactor.

It catalyses the reaction L-methionyl-[protein] + [thioredoxin]-disulfide + H2O = L-methionyl-(R)-S-oxide-[protein] + [thioredoxin]-dithiol. This chain is Peptide methionine sulfoxide reductase MsrB, found in Pseudomonas savastanoi pv. phaseolicola (strain 1448A / Race 6) (Pseudomonas syringae pv. phaseolicola (strain 1448A / Race 6)).